We begin with the raw amino-acid sequence, 1160 residues long: Nonribosomal peptide synthetase fmqC (1160 aa).

Residues 132–520 (TYRELNDRSS…LGEVEHALQQ (389 aa)) form an adenylation region. Residues 642 to 719 (QPVTQLEESL…EMAGMLDGVT (78 aa)) enclose the Carrier domain. Ser679 carries the O-(pantetheine 4'-phosphoryl)serine modification. Positions 749-1025 (CTLEDLQEGF…CAAAETPMRI (277 aa)) are condensation.

This sequence belongs to the NRP synthetase family. Interacts with the mitogen-activated protein kinase mpkA. Post-translationally, phosphorylated by mpkA during conidiogenesis.

The protein localises to the cytoplasm. The protein operates within alkaloid biosynthesis. Functionally, nonribosomal peptide synthetase; part of the gene cluster that mediates the biosynthesis of the antitumor fumiquinazolines that confer a dual-usage capability to defend against phagocytes in the environment and animal hosts. The simplest member is fumiquinazoline F (FQF) with a 6-6-6 tricyclic core derived from anthranilic acid (Ant), tryptophan (Trp), and alanine (Ala). The trimodular NRPS fmqA is responsible for FQF formation. Modules 1, 2 and 3 of fmqA are predicted to activate and load Ant, Trp and Ala, respectively, providing for the assembly of an Ant-Trp-Ala-S-enzyme intermediate that would undergo double cyclization for chain release and generation of the tricyclic 6-6-6 product fumiquinazoline F. The presence of an E domain predicted for module 2 of fmqA is consistent with epimerization of L-Trp to D-Trp during assembly to generate the R-stereocenter at C14 of FQF. The FAD-dependent monooxygenase fmqB and the monomodular NRPS fmqC then maturate FQF to FQA. FmqB oxidizes the 2',3'-double bond of the indole side chain of FQF, and fmqC activates L-Ala as the adenylate, installs it as the pantetheinyl thioester on its carrier protein domain, and acylates the oxidized indole for subsequent intramolecular cyclization to create the 6-5-5-imidazolindolone of FQA. The FAD-linked oxidoreductase fmqD introduces a third layer of scaffold complexity by converting FQA to the spirohemiaminal FQC, presumably by catalyzing the formation of a transient imine within the pyrazinone ring. FQC subsequently converts nonenzymatically to the known cyclic aminal FQD. This is Nonribosomal peptide synthetase fmqC from Aspergillus fumigatus (strain ATCC MYA-4609 / CBS 101355 / FGSC A1100 / Af293) (Neosartorya fumigata).